The chain runs to 573 residues: uncharacterized protein (573 aa).

2 disordered regions span residues 1 to 33 and 60 to 101; these read MLQQGSSSRRSLHGNDFHTLTSPSRRDSLSIPR and LVAN…SRYD. Residues 60-70 are compositionally biased toward polar residues; the sequence is LVANRSDNNGN. An N-linked (GlcNAc...) asparagine glycan is attached at N63. Over residues 84–95 the composition is skewed to low complexity; the sequence is SSSTSSLPSTRN. Repeat copies occupy residues 102-103, 104-105, 106-107, 108-109, 110-111, 112-113, 114-115, 116-117, 118-119, and 120-121. A 10 X 2 AA tandem repeats of N-M region spans residues 102–121; it reads NMNMNMNMNMNMNMNMNMNM. N-linked (GlcNAc...) asparagine glycosylation occurs at N123. Disordered stretches follow at residues 150-174, 192-271, 286-317, and 357-379; these read IPEKYSGSRYSLRSSPPTYSNPRVR, QFPN…IRSN, KSSNSADSVEENSKTKQKRKNPERVVPEPITS, and NNRIPVLPPPRSPNRPTLSDKRT. Positions 157-170 are enriched in polar residues; that stretch reads SRYSLRSSPPTYSN. The span at 208–225 shows a compositional bias: low complexity; sequence LPPSSTFPDSPSSSSLPL. The segment covering 226 to 252 has biased composition (polar residues); it reads TQTGGPSSADNDSIATGTNNRSPQQTK. The N-linked (GlcNAc...) asparagine glycan is linked to N236. Residues N437 and N442 are each glycosylated (N-linked (GlcNAc...) asparagine). 2 stretches are compositionally biased toward low complexity: residues 441 to 457 and 466 to 483; these read INSSISSPAPSSSSSSS and SISSSPTPAPSSGSSKSK. Residues 441–483 form a disordered region; it reads INSSISSPAPSSSSSSSLVSRGPMQSISSSPTPAPSSGSSKSK. 3 N-linked (GlcNAc...) asparagine glycosylation sites follow: N498, N535, and N541.

The protein to yeast AFR1. Post-translationally, N-glycosylated.

This is an uncharacterized protein from Saccharomyces cerevisiae (strain ATCC 204508 / S288c) (Baker's yeast).